The chain runs to 681 residues: UvrABC system protein B (681 aa).

The Helicase ATP-binding domain occupies 32–419 (ARLSRGERDV…GGEYVEQVIR (388 aa)). 45–52 (GATGTGKS) serves as a coordination point for ATP. Residues 98 to 121 (YYDYYQPEAYIAQTDTYIEKDSSI) carry the Beta-hairpin motif. Residues 436 to 602 (QIDDLIHEIK…PLRKKIADIL (167 aa)) form the Helicase C-terminal domain. Residues 607–616 (ESKAESTAPS) show a composition bias toward polar residues. The disordered stretch occupies residues 607 to 626 (ESKAESTAPSSDAVVVSKTN). Positions 636–671 (RSLIDDLTTQMGTAARELKFELAGRLRDEIAELKKE) constitute a UVR domain.

It belongs to the UvrB family. In terms of assembly, forms a heterotetramer with UvrA during the search for lesions. Interacts with UvrC in an incision complex.

It is found in the cytoplasm. In terms of biological role, the UvrABC repair system catalyzes the recognition and processing of DNA lesions. A damage recognition complex composed of 2 UvrA and 2 UvrB subunits scans DNA for abnormalities. Upon binding of the UvrA(2)B(2) complex to a putative damaged site, the DNA wraps around one UvrB monomer. DNA wrap is dependent on ATP binding by UvrB and probably causes local melting of the DNA helix, facilitating insertion of UvrB beta-hairpin between the DNA strands. Then UvrB probes one DNA strand for the presence of a lesion. If a lesion is found the UvrA subunits dissociate and the UvrB-DNA preincision complex is formed. This complex is subsequently bound by UvrC and the second UvrB is released. If no lesion is found, the DNA wraps around the other UvrB subunit that will check the other stand for damage. This chain is UvrABC system protein B, found in Corynebacterium diphtheriae (strain ATCC 700971 / NCTC 13129 / Biotype gravis).